The sequence spans 215 residues: Urease accessory protein UreG (215 aa).

A disordered region spans residues 1–21 (MNAPASSPARRTKKLPPLRVG). 24-31 (GPVGSGKT) is a binding site for GTP.

It belongs to the SIMIBI class G3E GTPase family. UreG subfamily. In terms of assembly, homodimer. UreD, UreF and UreG form a complex that acts as a GTP-hydrolysis-dependent molecular chaperone, activating the urease apoprotein by helping to assemble the nickel containing metallocenter of UreC. The UreE protein probably delivers the nickel.

It localises to the cytoplasm. Its function is as follows. Facilitates the functional incorporation of the urease nickel metallocenter. This process requires GTP hydrolysis, probably effectuated by UreG. The protein is Urease accessory protein UreG of Burkholderia vietnamiensis (strain G4 / LMG 22486) (Burkholderia cepacia (strain R1808)).